Here is a 66-residue protein sequence, read N- to C-terminus: Cell division protein FtsB (66 aa).

Topologically, residues methionine 1–methionine 3 are cytoplasmic. The helical transmembrane segment at leucine 4 to isoleucine 21 threads the bilayer. At glycine 22–asparagine 66 the chain is on the extracellular side. A coiled-coil region spans residues valine 38 to asparagine 66.

Belongs to the FtsB family.

Its subcellular location is the cell membrane. Essential cell division protein. May link together the upstream cell division proteins, which are predominantly cytoplasmic, with the downstream cell division proteins, which are predominantly extracellular. In Buchnera aphidicola subsp. Schizaphis graminum (strain Sg), this protein is Cell division protein FtsB.